A 130-amino-acid chain; its full sequence is Small ribosomal subunit protein uS11 (130 aa).

Belongs to the universal ribosomal protein uS11 family. In terms of assembly, part of the 30S ribosomal subunit. Interacts with proteins S7 and S18. Binds to IF-3.

Functionally, located on the platform of the 30S subunit, it bridges several disparate RNA helices of the 16S rRNA. Forms part of the Shine-Dalgarno cleft in the 70S ribosome. The chain is Small ribosomal subunit protein uS11 from Psychrobacter sp. (strain PRwf-1).